Consider the following 105-residue polypeptide: Protein LBH (105 aa).

One can recognise an LBH domain in the interval 18 to 104; the sequence is MTEVMMNTQP…CEETAKENKE (87 aa). Ser-63 is modified (phosphoserine). Over residues 86–96 the composition is skewed to acidic residues; that stretch reads LVQEDEQDNCE. The segment at 86-105 is disordered; that stretch reads LVQEDEQDNCEETAKENKEQ.

It belongs to the LBH family. As to expression, highly expressed in heart, and expressed at low levels in placenta, lung, skeletal muscle, kidney and liver.

It is found in the nucleus. Its subcellular location is the cytoplasm. Transcriptional activator which may act in mitogen-activated protein kinase signaling pathway. The protein is Protein LBH of Homo sapiens (Human).